Consider the following 527-residue polypeptide: Peptide chain release factor 3 (527 aa).

In terms of domain architecture, tr-type G spans 9–277 (AKRRTFAIIS…AVVDWAPRPL (269 aa)). GTP is bound by residues 18-25 (SHPDAGKT), 86-90 (DTPGH), and 140-143 (NKLD).

It belongs to the TRAFAC class translation factor GTPase superfamily. Classic translation factor GTPase family. PrfC subfamily.

The protein resides in the cytoplasm. Functionally, increases the formation of ribosomal termination complexes and stimulates activities of RF-1 and RF-2. It binds guanine nucleotides and has strong preference for UGA stop codons. It may interact directly with the ribosome. The stimulation of RF-1 and RF-2 is significantly reduced by GTP and GDP, but not by GMP. This chain is Peptide chain release factor 3, found in Pseudomonas entomophila (strain L48).